A 59-amino-acid chain; its full sequence is Conotoxin Bu1.2 (59 aa).

The signal sequence occupies residues 1-16 (MFTVFLLVVLATTVVS). The propeptide occupies 17–42 (FSTDDESDGSNEEPSADQAARSAMNR). The disordered stretch occupies residues 18 to 43 (STDDESDGSNEEPSADQAARSAMNRP). Residues 19–31 (TDDESDGSNEEPS) show a composition bias toward acidic residues. Disulfide bonds link Cys-46–Cys-52 and Cys-47–Cys-57. Gly-58 carries the post-translational modification Glycine amide.

This sequence belongs to the conotoxin A superfamily. As to expression, expressed by the venom duct.

The protein resides in the secreted. The chain is Conotoxin Bu1.2 from Conus bullatus (Bubble cone).